A 147-amino-acid polypeptide reads, in one-letter code: Large ribosomal subunit protein bL9 (147 aa).

This sequence belongs to the bacterial ribosomal protein bL9 family.

Functionally, binds to the 23S rRNA. The sequence is that of Large ribosomal subunit protein bL9 from Campylobacter jejuni subsp. jejuni serotype O:23/36 (strain 81-176).